The primary structure comprises 168 residues: Chorismate pyruvate-lyase (168 aa).

Residues Met36, Arg78, Leu116, and Glu157 each contribute to the substrate site.

Belongs to the UbiC family. Monomer.

The protein resides in the cytoplasm. It catalyses the reaction chorismate = 4-hydroxybenzoate + pyruvate. It functions in the pathway cofactor biosynthesis; ubiquinone biosynthesis. Removes the pyruvyl group from chorismate, with concomitant aromatization of the ring, to provide 4-hydroxybenzoate (4HB) for the ubiquinone pathway. The protein is Chorismate pyruvate-lyase of Yersinia enterocolitica serotype O:8 / biotype 1B (strain NCTC 13174 / 8081).